The primary structure comprises 1220 residues: Plasma membrane calcium-transporting ATPase 1 (1220 aa).

Gly2 carries the N-acetylglycine modification. Residues 2 to 105 (GDMANNSVAY…KTFLQLVWEA (104 aa)) are Cytoplasmic-facing. Phosphoserine occurs at positions 8 and 17. Residues 106-126 (LQDVTLIILEIAAIVSLGLSF) form a helical membrane-spanning segment. Residues 127–154 (YQPPEGDNALCGEVSVGEEEGEGETGWI) lie on the Extracellular side of the membrane. A helical transmembrane segment spans residues 155–175 (EGAAILLSVVCVVLVTAFNDW). The Cytoplasmic segment spans residues 176 to 366 (SKEKQFRGLQ…KEKSVLQGKL (191 aa)). The interval 297–356 (EEEKKDEKKKEKKNKKQDGAIENRNKAKAQDGAAMEMQPLKSEEGGDGDEKDKKKANLPK) is disordered. 2 stretches are compositionally biased toward basic and acidic residues: residues 312 to 325 (KQDGAIENRNKAKA) and 337 to 356 (KSEEGGDGDEKDKKKANLPK). Ser338 carries the phosphoserine modification. The chain crosses the membrane as a helical span at residues 367 to 386 (TKLAVQIGKAGLLMSAITVI). At 387–418 (ILVLYFVIDTFWVQKRPWLAECTPIYIQYFVK) the chain is on the extracellular side. Residues 419 to 439 (FFIIGVTVLVVAVPEGLPLAV) form a helical membrane-spanning segment. Topologically, residues 440 to 855 (TISLAYSVKK…RNVYDSISKF (416 aa)) are cytoplasmic. Catalysis depends on Asp475, which acts as the 4-aspartylphosphate intermediate. 3 residues coordinate Mg(2+): Asp475, Thr477, and Asp797. The helical transmembrane segment at 856–876 (LQFQLTVNVVAVIVAFTGACI) threads the bilayer. The Extracellular segment spans residues 877–882 (TQDSPL). Residues 883–903 (KAVQMLWVNLIMDTLASLALA) form a helical membrane-spanning segment. Residues 904-927 (TEPPTESLLLRKPYGRNKPLISRT) lie on the Cytoplasmic side of the membrane. The chain crosses the membrane as a helical span at residues 928–948 (MMKNILGHAFYQLVVVFTLLF). Residues 949–971 (AGEKFFDIDSGRNAPLHAPPSEH) lie on the Extracellular side of the membrane. Residues 972-991 (YTIVFNTFVLMQLFNEINAR) traverse the membrane as a helical segment. Residues 992–1005 (KIHGERNVFEGIFN) lie on the Cytoplasmic side of the membrane. The chain crosses the membrane as a helical span at residues 1006 to 1027 (NAIFCTIVLGTFVVQIIIVQFG). Residues 1028–1039 (GKPFSCSELSIE) are Extracellular-facing. Residues 1040-1060 (QWLWSIFLGMGTLLWGQLIST) traverse the membrane as a helical segment. Residues 1061-1220 (IPTSRLKFLK…SPLHSLETSL (160 aa)) are Cytoplasmic-facing. The interval 1100-1117 (LRRGQILWFRGLNRIQTQ) is calmodulin-binding subdomain A. At Thr1116 the chain carries Phosphothreonine; by PKC. The segment at 1118 to 1220 (IRVVNAFRSS…SPLHSLETSL (103 aa)) is required for basolateral membrane targeting. 2 positions are modified to phosphoserine: Ser1140 and Ser1155. A disordered region spans residues 1160–1220 (PLIDDTDAED…SPLHSLETSL (61 aa)). Residue Thr1165 is modified to Phosphothreonine. Phosphoserine; by PKA is present on Ser1178. Phosphoserine is present on Ser1182. Polar residues predominate over residues 1200-1220 (MNKSATSSSPGSPLHSLETSL).

Belongs to the cation transport ATPase (P-type) (TC 3.A.3) family. Type IIB subfamily. As to quaternary structure, monomer. Dimer. Oligomer. Calmodulin binding. Interacts with PDZD11. Interacts with SLC35G1 and STIM1; inhibits calcium-transporting ATPase activity after store depletion. Interacts with YWHAE; interacts with the monomeric and dimeric forms of the YWHAE but prefer the monomer form; this interaction inhibits calcium-transporting ATPase activity. Interacts with NPTN; this interaction stabilizes ATP2B1 and increases ATPase activity; this interaction controls T cell calcium homeostasis following T cell activation. Interacts with EPB41; regulates small intestinal calcium absorption through regulation of membrane expression of ATP2B1. Isoform B: Ubiquitously expressed. Isoform C: Found in brain cortex, skeletal muscle and heart muscle. Isoform D: Has only been found in fetal skeletal muscle. Isoform K: Found in small intestine and liver. Abundantly expressed in the endometrial epithelial cells and glandular epithelial cells in early-proliferative phase and early-secretory phases.

It localises to the cell membrane. The protein localises to the basolateral cell membrane. The protein resides in the synapse. It is found in the presynaptic cell membrane. Its subcellular location is the cytoplasmic vesicle. It localises to the secretory vesicle. The protein localises to the synaptic vesicle membrane. It catalyses the reaction Ca(2+)(in) + ATP + H2O = Ca(2+)(out) + ADP + phosphate + H(+). Its function is as follows. Catalyzes the hydrolysis of ATP coupled with the transport of calcium from the cytoplasm to the extracellular space thereby maintaining intracellular calcium homeostasis. Plays a role in blood pressure regulation through regulation of intracellular calcium concentration and nitric oxide production leading to regulation of vascular smooth muscle cells vasoconstriction. Positively regulates bone mineralization through absorption of calcium from the intestine. Plays dual roles in osteoclast differentiation and survival by regulating RANKL-induced calcium oscillations in preosteoclasts and mediating calcium extrusion in mature osteoclasts. Regulates insulin sensitivity through calcium/calmodulin signaling pathway by regulating AKT1 activation and NOS3 activation in endothelial cells. May play a role in synaptic transmission by modulating calcium and proton dynamics at the synaptic vesicles. The sequence is that of Plasma membrane calcium-transporting ATPase 1 from Homo sapiens (Human).